The primary structure comprises 332 residues: Potassium channel subfamily K member 17 (332 aa).

Topologically, residues 1-20 are cytoplasmic; it reads MYRPRARAAPEGRVRGCAVP. A helical transmembrane segment spans residues 21 to 43; it reads STVLLLLAYLAYLALGTGVFWTL. N-linked (GlcNAc...) asparagine glycosylation is found at asparagine 65 and asparagine 94. The pore-forming intramembrane region spans 106–124; sequence SFFFSVSTITTIGYGNLSP. Positions 116, 117, 118, and 119 each coordinate K(+). The interval 116–121 is selectivity filter 1; that stretch reads TIGYGN. The chain crosses the membrane as a helical span at residues 128–148; sequence AARLFCIFFALVGIPLNLVVL. The Cytoplasmic portion of the chain corresponds to 149–179; the sequence is NRLGHLMQQGVNHWASRLGGTWQDPDKARWL. Residues 180–200 traverse the membrane as a helical segment; the sequence is AGSGALLSGLLLFLLLPPLLF. Residues 211 to 230 constitute an intramembrane region (pore-forming); that stretch reads GFYFAFITLSTVGFGDYVIG. Threonine 221, valine 222, glycine 223, and phenylalanine 224 together coordinate K(+). The interval 221 to 226 is selectivity filter 2; the sequence is TVGFGD. Residues 244–264 traverse the membrane as a helical segment; that stretch reads MVSLWILFGMAWLALIIKLIL. At 265-332 the chain is on the cytoplasmic side; the sequence is SQLETPGRVC…AHAAGCGKDS (68 aa). The tract at residues 287-312 is disordered; it reads SQSWRQGPDREPESHSPQQGCYPEGP.

It belongs to the two pore domain potassium channel (TC 1.A.1.8) family. As to quaternary structure, homodimer; disulfide-linked. Heterodimer with KCNK5 and KCNK16. In terms of tissue distribution, widely expressed. Highly expressed in aorta and coronary artery. Expressed in pancreas, in both endocrine (alpha, beta, gamma, delta, and epsilon) and exocrine (acinar and ductal) cells.

The protein resides in the cell membrane. The enzyme catalyses K(+)(in) = K(+)(out). It catalyses the reaction Rb(+)(in) = Rb(+)(out). The catalysed reaction is Cs(+)(in) = Cs(+)(out). Its activity is regulated as follows. Inhibited by Ba(2+), quinidine, chloroform and halothane. Activated at alkaline pH. Activated by quinine and isoflurane. K(+) channel that conducts voltage-dependent outward rectifying currents upon membrane depolarization. Voltage sensing is coupled to K(+) electrochemical gradient in an 'ion flux gating' mode where outward but not inward ion flow opens the gate. Homo- and heterodimerizes to form functional channels with distinct regulatory and gating properties. Present in the cardiac conduction system where it may regulate action potential duration and beating frequency of cardiac myocytes. Permeable to other monovalent cations such as Rb(+) and Cs(+). The protein is Potassium channel subfamily K member 17 of Homo sapiens (Human).